A 376-amino-acid polypeptide reads, in one-letter code: Queuine tRNA-ribosyltransferase (376 aa).

Catalysis depends on Asp-93, which acts as the Proton acceptor. Residues 93-97 (DSGGF), Asp-147, Gln-190, and Gly-217 each bind substrate. The RNA binding stretch occupies residues 248–254 (GVGKPDD). The Nucleophile role is filled by Asp-267. 4 residues coordinate Zn(2+): Cys-305, Cys-307, Cys-310, and His-336.

This sequence belongs to the queuine tRNA-ribosyltransferase family. Homodimer. Within each dimer, one monomer is responsible for RNA recognition and catalysis, while the other monomer binds to the replacement base PreQ1. It depends on Zn(2+) as a cofactor.

The catalysed reaction is 7-aminomethyl-7-carbaguanine + guanosine(34) in tRNA = 7-aminomethyl-7-carbaguanosine(34) in tRNA + guanine. Its pathway is tRNA modification; tRNA-queuosine biosynthesis. Its function is as follows. Catalyzes the base-exchange of a guanine (G) residue with the queuine precursor 7-aminomethyl-7-deazaguanine (PreQ1) at position 34 (anticodon wobble position) in tRNAs with GU(N) anticodons (tRNA-Asp, -Asn, -His and -Tyr). Catalysis occurs through a double-displacement mechanism. The nucleophile active site attacks the C1' of nucleotide 34 to detach the guanine base from the RNA, forming a covalent enzyme-RNA intermediate. The proton acceptor active site deprotonates the incoming PreQ1, allowing a nucleophilic attack on the C1' of the ribose to form the product. After dissociation, two additional enzymatic reactions on the tRNA convert PreQ1 to queuine (Q), resulting in the hypermodified nucleoside queuosine (7-(((4,5-cis-dihydroxy-2-cyclopenten-1-yl)amino)methyl)-7-deazaguanosine). This is Queuine tRNA-ribosyltransferase from Ruegeria sp. (strain TM1040) (Silicibacter sp.).